Reading from the N-terminus, the 663-residue chain is Zeaxanthin epoxidase, chloroplastic (663 aa).

The transit peptide at methionine 1 to lysine 50 directs the protein to the chloroplast. Residues lysine 81 to glutamate 109 and threonine 359 to aspartate 372 contribute to the FAD site. In terms of domain architecture, FHA spans leucine 547 to glycine 611.

The cofactor is FAD. As to expression, higher expression in leaves than in roots.

Its subcellular location is the plastid. It is found in the chloroplast membrane. The protein localises to the chloroplast thylakoid membrane. The enzyme catalyses all-trans-zeaxanthin + 4 reduced [2Fe-2S]-[ferredoxin] + 2 O2 + 4 H(+) = all-trans-violaxanthin + 4 oxidized [2Fe-2S]-[ferredoxin] + 2 H2O. It functions in the pathway plant hormone biosynthesis; abscisate biosynthesis. Functionally, converts zeaxanthin into antheraxanthin and subsequently violaxanthin. Involved in the epoxidation of zeaxanthin. Plays an important role in resistance to stresses, seed development and dormancy. The polypeptide is Zeaxanthin epoxidase, chloroplastic (ABA2) (Nicotiana plumbaginifolia (Leadwort-leaved tobacco)).